A 92-amino-acid chain; its full sequence is Sec-independent protein translocase protein TatA (92 aa).

Residues 1–21 (MGIFDWKHWIVILVVVVLVFG) traverse the membrane as a helical segment. Residues 43-92 (MNDDEKPADPTVTPAQPVPPVQPQATAQANPPHTIDVQAQKVEEPIRKDV) are disordered. Positions 65–74 (PQATAQANPP) are enriched in low complexity. Residues 83–92 (KVEEPIRKDV) are compositionally biased toward basic and acidic residues.

The protein belongs to the TatA/E family. In terms of assembly, the Tat system comprises two distinct complexes: a TatABC complex, containing multiple copies of TatA, TatB and TatC subunits, and a separate TatA complex, containing only TatA subunits. Substrates initially bind to the TatABC complex, which probably triggers association of the separate TatA complex to form the active translocon.

Its subcellular location is the cell inner membrane. Part of the twin-arginine translocation (Tat) system that transports large folded proteins containing a characteristic twin-arginine motif in their signal peptide across membranes. TatA could form the protein-conducting channel of the Tat system. The chain is Sec-independent protein translocase protein TatA from Pseudomonas fluorescens (strain Pf0-1).